A 613-amino-acid polypeptide reads, in one-letter code: MASRPGFLTDWPWTPLGSFKYLLLAPLVFDSIYSYATIRDHEKLLIVAVTVWRIVHSQIWISLSRYQTAKGTKRILNKSIEFDQVDRERTWDDQIIFNTLIVYLTKVYVSGTSTIPFWRTDGVILVALLHAGPVEFIYYWFHRALHHHFLYSRYHSHHHSSIVTEPITSVVHPFAEHIGYTLILGLPLITTFMCGTVSVVSIALYLTYIDFMNNMGHCNFELIPKFLFSLLPPLKFLCYTPSFHSLHHTQFRTNYSLFMPMYDYIYGTTDECSDSLYETSLEKEEEKPDAIHLTHLTSLDSIYHLRLGFASLSSHPLSSRCYLFLMKPFALILSFILRSFSFQTFVVERNRFRDLTLHSHLLPKFSSHYMSHQQKECINKMIEAAILEADKKGVKVMSLGLLNQGEELNGYGEMYVRRHPKLKIRIVDGGSLAAEVVLHSIPVGTKEVLFRGQITKVARAIVFSLCQNAIKVMVLRKEEHSMLAEFLDDKCKENLIWLVGDGLSTKEQKMAKDGTLFLPFSQFPPKTLRKDCFYHTTPAMIIPHSAQNIDSCENWLGRRVMSAWRVGGIVHALEGWKEHECGLDDNSIINPPRVWEAALRNGFQPLLLPSLET.

6 helical membrane-spanning segments follow: residues 13-33 (WTPL…DSIY), 44-64 (LLIV…ISLS), 95-115 (IIFN…TSTI), 122-142 (GVIL…YWFH), 182-202 (LILG…VVSI), and 322-342 (YLFL…SFSF). One can recognise a Fatty acid hydroxylase domain in the interval 134-268 (VEFIYYWFHR…MPMYDYIYGT (135 aa)).

Belongs to the sterol desaturase family. Not detected in any tissues.

It localises to the membrane. This chain is Protein CER1-like 2, found in Arabidopsis thaliana (Mouse-ear cress).